The sequence spans 649 residues: ATP-dependent DNA helicase Q1 (649 aa).

A Helicase ATP-binding domain is found at 100–275 (INVTMAGKEV…QKILCIEKCF (176 aa)). 113-120 (MPTGGGKG) provides a ligand contact to ATP. Positions 219-222 (DEVH) match the DEVH box motif. One can recognise a Helicase C-terminal domain in the interval 300–451 (FIEDIVKLIN…EMVSYCQNIS (152 aa)). Positions 453, 471, 475, and 478 each coordinate Zn(2+). N6-acetyllysine occurs at positions 514 and 522. Phosphoserine occurs at positions 597 and 602. The span at 597 to 608 (SFRVESSQTCHS) shows a compositional bias: polar residues. The segment at 597 to 649 (SFRVESSQTCHSEQGDKKMEEKNSGNFQKKAANMLQQSGSKNTGAKKRKIDDA) is disordered. Basic and acidic residues predominate over residues 609–619 (EQGDKKMEEKN). Positions 630–639 (MLQQSGSKNT) are enriched in polar residues. Ser-634 carries the post-translational modification Phosphoserine. The span at 640–649 (GAKKRKIDDA) shows a compositional bias: basic residues.

This sequence belongs to the helicase family. RecQ subfamily. In terms of assembly, may form homodimers or higher order oligomers. Interacts with EXO1. Interacts with MLH1. Interacts with PARP1. Mg(2+) is required as a cofactor. Mn(2+) serves as cofactor. The cofactor is Zn(2+).

It localises to the nucleus. The catalysed reaction is Couples ATP hydrolysis with the unwinding of duplex DNA by translocating in the 3'-5' direction.. It carries out the reaction ATP + H2O = ADP + phosphate + H(+). The enzyme catalyses dATP + H2O = dADP + phosphate + H(+). DNA helicase that plays a role in DNA damage repair and genome stability. Exhibits a magnesium- and ATP-dependent DNA-helicase activity that unwinds single- and double-stranded DNA in a 3'-5' direction. Plays a role in restoring regressed replication forks. Required to restart stalled replication forks induced by abortive topoisomerase 1 and 2 lesions. May play a role in the repair of DNA that is damaged by ultraviolet light or other mutagens. This chain is ATP-dependent DNA helicase Q1 (RECQL), found in Pongo abelii (Sumatran orangutan).